The following is a 192-amino-acid chain: Xanthine phosphoribosyltransferase (192 aa).

Residues Leu20 and Asn27 each contribute to the xanthine site. Ala128–Ala132 lines the 5-phospho-alpha-D-ribose 1-diphosphate pocket. Lys156 is a binding site for xanthine.

Belongs to the purine/pyrimidine phosphoribosyltransferase family. Xpt subfamily. As to quaternary structure, homodimer.

Its subcellular location is the cytoplasm. It carries out the reaction XMP + diphosphate = xanthine + 5-phospho-alpha-D-ribose 1-diphosphate. It functions in the pathway purine metabolism; XMP biosynthesis via salvage pathway; XMP from xanthine: step 1/1. Functionally, converts the preformed base xanthine, a product of nucleic acid breakdown, to xanthosine 5'-monophosphate (XMP), so it can be reused for RNA or DNA synthesis. The protein is Xanthine phosphoribosyltransferase of Staphylococcus carnosus (strain TM300).